The sequence spans 648 residues: Magnetosome protein MamZ (648 aa).

Residues methionine 1–isoleucine 431 form a major facilitator domain region. A run of 18 helical transmembrane segments spans residues isoleucine 28–leucine 49, isoleucine 69–leucine 87, valine 94–leucine 113, leucine 119–valine 143, leucine 163–isoleucine 182, tyrosine 188–phenylalanine 207, phenylalanine 252–serine 273, alanine 285–tryptophan 305, alanine 317–phenylalanine 335, tryptophan 341–leucine 361, isoleucine 373–serine 395, alanine 407–alanine 428, proline 449–isoleucine 468, tyrosine 488–valine 506, tyrosine 518–valine 538, phenylalanine 558–phenylalanine 574, alanine 595–asparagine 612, and proline 618–tyrosine 634. The segment at lysine 444 to leucine 645 is ferric reductase-like domain, required for correct magnetite crystal formation.

This sequence in the N-terminal section; belongs to the major facilitator superfamily. In terms of assembly, probably interacts with FtsZ-like and MamY proteins.

Its subcellular location is the magnetosome membrane. In terms of biological role, required for correct biomineralization of the magnetosome; probably converts and then transports some form of iron. It is partially functionally redundant with MamH. May function with MamX, MamY amd Mms6 in biomineralization. Despite its strong similarity to MsrQ (AC V6EX82) this protein does not genetically interact with bona fide MsrP (AC V6F0A4), which is encoded elsewhere in the genome. This chain is Magnetosome protein MamZ, found in Magnetospirillum gryphiswaldense (strain DSM 6361 / JCM 21280 / NBRC 15271 / MSR-1).